A 427-amino-acid chain; its full sequence is UPF0761 membrane protein Plut_1323 (427 aa).

A run of 6 helical transmembrane segments spans residues 51–71, 105–125, 147–167, 188–208, 221–241, and 251–271; these read LLSIVPLLAVVLSILNVFAVF, TFTMPIFGALFLFIVALVLIS, FTLYWTVLTLGPVLLATSLAA, LLSLLPSTITVLALLLLYLLV, GALVATLLFEVSKRWFAFYVA, and GALSVIPMLFFWIYLGWVVVL.

The protein belongs to the UPF0761 family.

Its subcellular location is the cell inner membrane. The chain is UPF0761 membrane protein Plut_1323 from Chlorobium luteolum (strain DSM 273 / BCRC 81028 / 2530) (Pelodictyon luteolum).